A 215-amino-acid polypeptide reads, in one-letter code: Thymidylate kinase (215 aa).

ATP is bound at residue 12–19; it reads GLEGAGKT.

This sequence belongs to the thymidylate kinase family.

It carries out the reaction dTMP + ATP = dTDP + ADP. In terms of biological role, phosphorylation of dTMP to form dTDP in both de novo and salvage pathways of dTTP synthesis. The chain is Thymidylate kinase from Halorhodospira halophila (strain DSM 244 / SL1) (Ectothiorhodospira halophila (strain DSM 244 / SL1)).